A 319-amino-acid chain; its full sequence is uncharacterized protein (319 aa).

Positions 21 to 70 are disordered; the sequence is ETETLKNSTDEVQTSSSFSSSGGRQSSPLTSGSKLEREKQTPSLEQGDTQ. The segment covering 25-34 has biased composition (polar residues); the sequence is LKNSTDEVQT. The segment covering 35–51 has biased composition (low complexity); the sequence is SSSFSSSGGRQSSPLTS. Residues 61-70 are compositionally biased toward polar residues; that stretch reads TPSLEQGDTQ.

This is an uncharacterized protein from Homo sapiens (Human).